The following is a 257-amino-acid chain: Acetylglutamate kinase (257 aa).

Substrate is bound by residues 41–42 (GG), R63, and N158.

This sequence belongs to the acetylglutamate kinase family. ArgB subfamily.

The protein resides in the cytoplasm. It catalyses the reaction N-acetyl-L-glutamate + ATP = N-acetyl-L-glutamyl 5-phosphate + ADP. It functions in the pathway amino-acid biosynthesis; L-arginine biosynthesis; N(2)-acetyl-L-ornithine from L-glutamate: step 2/4. Functionally, catalyzes the ATP-dependent phosphorylation of N-acetyl-L-glutamate. The protein is Acetylglutamate kinase of Bacteroides thetaiotaomicron (strain ATCC 29148 / DSM 2079 / JCM 5827 / CCUG 10774 / NCTC 10582 / VPI-5482 / E50).